The sequence spans 270 residues: Homeobox protein pal-1 (270 aa).

Disordered regions lie at residues 1–24 (MSVDVKSDFSENESSSTPSPTTVP), 96–130 (VKPPLSNGSSSSDSGMYPSPSDMMTPFPSTSSGAA), and 175–201 (LGNNHGKDRRSSSDGKTLPTGPGTNNV). Low complexity-rich tracts occupy residues 14–24 (SSSTPSPTTVP) and 101–130 (SNGSSSSDSGMYPSPSDMMTPFPSTSSGAA). The homeobox DNA-binding region spans 206 to 265 (ADKYRMVYSDYQRLELEKEFHTSPFITSDRKSQLSTMLSLTERQIKIWFQNRRAKDRRDK).

The protein belongs to the Caudal homeobox family. In terms of assembly, interacts with tir-1 and let-756. Blastomeres. Embryo. Oocytes.

The protein localises to the nucleus. It is found in the chromosome. Its subcellular location is the centromere. The protein resides in the kinetochore. Functionally, transcriptional activator. Interacts with promoter regions for tbx-8.9, tbx-9, elt-1, hnd-1, scrt-1, and vab-7 genes. Binds the sequence ATTTATGAC. Binds to the enhancer region of the hlh-1 gene promoter during embryonic body wall muscle development. Activates the gene for mab-5 in embryo development. Necessary for vab-7 expression in C blastomeres in the posterior of embryos. Required for posterior V6 neuroectoblast cell fate specification during postembryonic neurogenesis (patterning) which generates the characteristic ray lineage during male tail development. Binds to ced-3 promoter and activated expression which is crucial for tail-spike cell death. Has a role in E cell specification in endoderm development and body wall muscle development. The chain is Homeobox protein pal-1 (pal-1) from Caenorhabditis elegans.